The following is a 55-amino-acid chain: Cop-6 protein (55 aa).

Belongs to the transcriptional regulatory CopG/NikR family.

Acts in trans as a negative regulatory element in pE194 replication. In Staphylococcus aureus, this protein is Cop-6 protein.